The primary structure comprises 649 residues: ATP-dependent zinc metalloprotease FtsH (649 aa).

The Cytoplasmic portion of the chain corresponds to 1 to 18 (MQCSYPLARQLERSSALN). The chain crosses the membrane as a helical span at residues 19-39 (NNLFQKAAIWLVIALVLFTVF). Over 40-115 (KQFDKPRAQD…VTGKADDEPN (76 aa)) the chain is Periplasmic. The helical transmembrane segment at 116-136 (VLVQALYYLGPTLLIIVFWFY) threads the bilayer. The Cytoplasmic portion of the chain corresponds to 137–649 (MMRQMQGGGK…PATARADETV (513 aa)). Residue 210–217 (GPPGTGKT) participates in ATP binding. His432 provides a ligand contact to Zn(2+). The active site involves Glu433. The Zn(2+) site is built by His436 and Asp508. The tract at residues 606-649 (IMAGRPPRPPRGAQGPNSGGNTPPGGSPVAPTNAPATARADETV) is disordered. Over residues 616–626 (RGAQGPNSGGN) the composition is skewed to low complexity.

It in the central section; belongs to the AAA ATPase family. This sequence in the C-terminal section; belongs to the peptidase M41 family. Homohexamer. Zn(2+) serves as cofactor.

The protein resides in the cell inner membrane. Functionally, acts as a processive, ATP-dependent zinc metallopeptidase for both cytoplasmic and membrane proteins. Plays a role in the quality control of integral membrane proteins. The chain is ATP-dependent zinc metalloprotease FtsH from Cupriavidus metallidurans (strain ATCC 43123 / DSM 2839 / NBRC 102507 / CH34) (Ralstonia metallidurans).